The chain runs to 134 residues: Ribosome-binding factor A (134 aa).

This sequence belongs to the RbfA family. Monomer. Binds 30S ribosomal subunits, but not 50S ribosomal subunits or 70S ribosomes.

The protein resides in the cytoplasm. In terms of biological role, one of several proteins that assist in the late maturation steps of the functional core of the 30S ribosomal subunit. Associates with free 30S ribosomal subunits (but not with 30S subunits that are part of 70S ribosomes or polysomes). Required for efficient processing of 16S rRNA. May interact with the 5'-terminal helix region of 16S rRNA. The chain is Ribosome-binding factor A from Rhizobium johnstonii (strain DSM 114642 / LMG 32736 / 3841) (Rhizobium leguminosarum bv. viciae).